Here is a 639-residue protein sequence, read N- to C-terminus: Chaperone protein DnaK (639 aa).

Thr198 carries the post-translational modification Phosphothreonine; by autocatalysis. The segment covering 603–618 (AKAQTQGGAQEGAAKQ) has biased composition (low complexity). A disordered region spans residues 603 to 639 (AKAQTQGGAQEGAAKQSNATADDVVDAEFEEVKDDKK). Over residues 625-639 (DVVDAEFEEVKDDKK) the composition is skewed to acidic residues.

Belongs to the heat shock protein 70 family.

In terms of biological role, acts as a chaperone. The chain is Chaperone protein DnaK from Shewanella sp. (strain MR-4).